The chain runs to 346 residues: Protein RecA (346 aa).

Position 67-74 (67-74 (GPESSGKT)) interacts with ATP.

The protein belongs to the RecA family.

Its subcellular location is the cytoplasm. Functionally, can catalyze the hydrolysis of ATP in the presence of single-stranded DNA, the ATP-dependent uptake of single-stranded DNA by duplex DNA, and the ATP-dependent hybridization of homologous single-stranded DNAs. It interacts with LexA causing its activation and leading to its autocatalytic cleavage. In Mycobacterium marinum (strain ATCC BAA-535 / M), this protein is Protein RecA.